The primary structure comprises 241 residues: Ribonuclease PH (241 aa).

Residues Arg89 and 127–129 (GTR) contribute to the phosphate site.

The protein belongs to the RNase PH family. As to quaternary structure, homohexameric ring arranged as a trimer of dimers.

The enzyme catalyses tRNA(n+1) + phosphate = tRNA(n) + a ribonucleoside 5'-diphosphate. Phosphorolytic 3'-5' exoribonuclease that plays an important role in tRNA 3'-end maturation. Removes nucleotide residues following the 3'-CCA terminus of tRNAs; can also add nucleotides to the ends of RNA molecules by using nucleoside diphosphates as substrates, but this may not be physiologically important. Probably plays a role in initiation of 16S rRNA degradation (leading to ribosome degradation) during starvation. The protein is Ribonuclease PH of Xylella fastidiosa (strain 9a5c).